The primary structure comprises 209 residues: MKTSKTASESGINLEIIFAGRSNVGKSSLLKELFGAKVRVGKRPGVTLRPTHAQVSDLLITDMPGFGFMSGVKERKQDIVKDKTVHYIEDNAGRIKIAVLVIDGPAFPEIVDRWDSRDQIPIDVEMFDFLREIGIDTIVAANKMDKVKENESDPLLNEVAIRLGLEPPWQNWKHIIAPISAKKGDLKTLKGLLRDRLHEMKRDDLFKYI.

The EngB-type G domain maps to Ile12–Asp203. Residues Gly20 to Ser27, Gly45 to Arg49, Asp62 to Gly65, Asn142 to Asp145, and Ile179 to Ala181 each bind GTP. 2 residues coordinate Mg(2+): Ser27 and Thr47.

It belongs to the TRAFAC class TrmE-Era-EngA-EngB-Septin-like GTPase superfamily. EngB GTPase family. Mg(2+) is required as a cofactor.

Necessary for normal cell division and for the maintenance of normal septation. This is Probable GTP-binding protein EngB from Methanosarcina mazei (strain ATCC BAA-159 / DSM 3647 / Goe1 / Go1 / JCM 11833 / OCM 88) (Methanosarcina frisia).